We begin with the raw amino-acid sequence, 196 residues long: RNA pyrophosphohydrolase (196 aa).

The 144-residue stretch at 6–149 (GYRPNVGIVI…KRDVYRKVMK (144 aa)) folds into the Nudix hydrolase domain. Residues 38–59 (GGINDNESAEQAMYRELHEEVG) carry the Nudix box motif. The disordered stretch occupies residues 166–196 (SREANSQSNSANKKYSQTKYTKRHFYKSKGQ). Residues 167-184 (REANSQSNSANKKYSQTK) are compositionally biased toward polar residues. Residues 185–196 (YTKRHFYKSKGQ) are compositionally biased toward basic residues.

The protein belongs to the Nudix hydrolase family. RppH subfamily. A divalent metal cation serves as cofactor.

In terms of biological role, accelerates the degradation of transcripts by removing pyrophosphate from the 5'-end of triphosphorylated RNA, leading to a more labile monophosphorylated state that can stimulate subsequent ribonuclease cleavage. The protein is RNA pyrophosphohydrolase of Haemophilus influenzae (strain 86-028NP).